A 121-amino-acid polypeptide reads, in one-letter code: Large ribosomal subunit protein bL12 (121 aa).

Belongs to the bacterial ribosomal protein bL12 family. In terms of assembly, homodimer. Part of the ribosomal stalk of the 50S ribosomal subunit. Forms a multimeric L10(L12)X complex, where L10 forms an elongated spine to which 2 to 4 L12 dimers bind in a sequential fashion. Binds GTP-bound translation factors.

Its function is as follows. Forms part of the ribosomal stalk which helps the ribosome interact with GTP-bound translation factors. Is thus essential for accurate translation. This chain is Large ribosomal subunit protein bL12, found in Lactococcus lactis subsp. lactis (strain IL1403) (Streptococcus lactis).